Reading from the N-terminus, the 212-residue chain is Histone H1.2 (212 aa).

Residues 1-17 (MSEAAPAAPAAAPPAEK) show a composition bias toward low complexity. Residues 1–41 (MSEAAPAAPAAAPPAEKAPAKKKAAKKPAGVRRKASGPPVS) form a disordered region. Ser2 is modified (N-acetylserine). Ser2 bears the Phosphoserine mark. Lys17 is modified (N6-acetyllysine). The span at 20–35 (AKKKAAKKPAGVRRKA) shows a compositional bias: basic residues. An N6-(2-hydroxyisobutyryl)lysine mark is found at Lys23, Lys26, and Lys27. Lys34 is subject to N6-(beta-hydroxybutyryl)lysine; alternate. Lys34 bears the N6-crotonyllysine; alternate mark. The residue at position 34 (Lys34) is an N6-methyllysine; alternate. In terms of domain architecture, H15 spans 36–109 (SGPPVSELIT…GASGSFKLNK (74 aa)). Lys46 carries the N6-(2-hydroxyisobutyryl)lysine modification. The residue at position 52 (Lys52) is an N6-(beta-hydroxybutyryl)lysine; alternate. An N6-(2-hydroxyisobutyryl)lysine; alternate modification is found at Lys52. At Arg54 the chain carries Citrulline. Position 63 is an N6-(2-hydroxyisobutyryl)lysine (Lys63). N6-(beta-hydroxybutyryl)lysine; alternate is present on Lys64. Lys64 carries the N6-crotonyllysine; alternate modification. N6-(2-hydroxyisobutyryl)lysine; alternate is present on Lys64. Residues Lys75 and Lys81 each carry the N6-(2-hydroxyisobutyryl)lysine modification. N6-(beta-hydroxybutyryl)lysine; alternate is present on residues Lys85 and Lys90. 3 positions are modified to N6-crotonyllysine; alternate: Lys85, Lys90, and Lys97. Lys85, Lys90, and Lys97 each carry N6-(2-hydroxyisobutyryl)lysine; alternate. Lys97 is modified (N6-succinyllysine; alternate). Positions 98–212 (GTGASGSFKL…KAKKVAAKKK (115 aa)) are disordered. Ser104 carries the phosphoserine; by PKC modification. Residue Lys106 is modified to N6-(beta-hydroxybutyryl)lysine. N6-(2-hydroxyisobutyryl)lysine occurs at positions 110, 117, 121, 129, and 136. The segment covering 121-148 (KKAGAAKAKKPAGAAKKPKKATGAATPK) has biased composition (low complexity). A Phosphothreonine modification is found at Thr146. Lys148 bears the N6-(2-hydroxyisobutyryl)lysine mark. The span at 149–160 (KAAKKTPKKAKK) shows a compositional bias: basic residues. 2 positions are modified to N6-crotonyllysine; alternate: Lys159 and Lys168. Residues Lys159 and Lys168 each carry the N6-(2-hydroxyisobutyryl)lysine; alternate modification. Residues 169–212 (KVAKSPKKAKVTKPKKVKSASKAVKPKAAKPKVAKAKKVAAKKK) show a composition bias toward basic residues. At Lys186 the chain carries N6-methyllysine; by EHMT1 and EHMT2. An ADP-ribosylserine modification is found at Ser187. Lys212 carries the post-translational modification N6-(2-hydroxyisobutyryl)lysine.

This sequence belongs to the histone H1/H5 family. Interacts with TSC22D1 isoform 2. H1 histones are progressively phosphorylated during the cell cycle, becoming maximally phosphorylated during late G2 phase and M phase, and being dephosphorylated sharply thereafter. In terms of processing, crotonylation (Kcr) is specifically present in male germ cells and marks testis-specific genes in post-meiotic cells, including X-linked genes that escape sex chromosome inactivation in haploid cells. Crotonylation marks active promoters and enhancers and confers resistance to transcriptional repressors. It is also associated with post-meiotically activated genes on autosomes. Post-translationally, ADP-ribosylated on Ser-187 in response to DNA damage. Citrullination at Arg-54 (H1R54ci) by PADI4 takes place within the DNA-binding site of H1 and results in its displacement from chromatin and global chromatin decondensation, thereby promoting pluripotency and stem cell maintenance. In terms of processing, hydroxybutyrylation of histones is induced by starvation.

It localises to the nucleus. The protein resides in the chromosome. In terms of biological role, histone H1 protein binds to linker DNA between nucleosomes forming the macromolecular structure known as the chromatin fiber. Histones H1 are necessary for the condensation of nucleosome chains into higher-order structured fibers. Also acts as a regulator of individual gene transcription through chromatin remodeling, nucleosome spacing and DNA methylation. The polypeptide is Histone H1.2 (Mus musculus (Mouse)).